Here is a 212-residue protein sequence, read N- to C-terminus: Peptide methionine sulfoxide reductase MsrA (212 aa).

Residue C52 is part of the active site.

The protein belongs to the MsrA Met sulfoxide reductase family.

It carries out the reaction L-methionyl-[protein] + [thioredoxin]-disulfide + H2O = L-methionyl-(S)-S-oxide-[protein] + [thioredoxin]-dithiol. It catalyses the reaction [thioredoxin]-disulfide + L-methionine + H2O = L-methionine (S)-S-oxide + [thioredoxin]-dithiol. In terms of biological role, has an important function as a repair enzyme for proteins that have been inactivated by oxidation. Catalyzes the reversible oxidation-reduction of methionine sulfoxide in proteins to methionine. The protein is Peptide methionine sulfoxide reductase MsrA of Escherichia fergusonii (strain ATCC 35469 / DSM 13698 / CCUG 18766 / IAM 14443 / JCM 21226 / LMG 7866 / NBRC 102419 / NCTC 12128 / CDC 0568-73).